A 212-amino-acid polypeptide reads, in one-letter code: Thymidylate kinase (212 aa).

11–18 is an ATP binding site; that stretch reads GMEGAGKS.

It belongs to the thymidylate kinase family.

The catalysed reaction is dTMP + ATP = dTDP + ADP. Its function is as follows. Phosphorylation of dTMP to form dTDP in both de novo and salvage pathways of dTTP synthesis. This is Thymidylate kinase from Colwellia psychrerythraea (strain 34H / ATCC BAA-681) (Vibrio psychroerythus).